Consider the following 102-residue polypeptide: uncharacterized protein (102 aa).

The segment at 1–71 (MKRMIRSHGR…GSANETSACT (71 aa)) is disordered. Residues 1-79 (MKRMIRSHGR…CTRTDHQKAD (79 aa)) lie on the Extracellular side of the membrane. Over residues 56-71 (SSGTRRGSANETSACT) the composition is skewed to polar residues. Asparagine 65 carries N-linked (GlcNAc...) asparagine; by host glycosylation. A helical transmembrane segment spans residues 80-97 (IGLWFMFLVFGLCSWLAM). Residues 98-102 (RYRAQ) are Cytoplasmic-facing.

It belongs to the HHV-5 UL15A protein family.

The protein localises to the host membrane. This is an uncharacterized protein from Human cytomegalovirus (strain AD169) (HHV-5).